The following is a 37-amino-acid chain: Large ribosomal subunit protein bL36 (37 aa).

It belongs to the bacterial ribosomal protein bL36 family.

The sequence is that of Large ribosomal subunit protein bL36 from Synechococcus elongatus (strain ATCC 33912 / PCC 7942 / FACHB-805) (Anacystis nidulans R2).